The chain runs to 700 residues: Receptor-type tyrosine-protein phosphatase epsilon (700 aa).

An N-terminal signal peptide occupies residues 1-19; it reads MEPLCPLLLVGFSLPLARA. Topologically, residues 20 to 46 are extracellular; the sequence is LRGNETTADSNETTTTSGPPDPGASQP. 2 N-linked (GlcNAc...) asparagine glycosylation sites follow: N23 and N30. The chain crosses the membrane as a helical span at residues 47–69; that stretch reads LLAWLLLPLLLLLLVLLLAAYFF. The Cytoplasmic segment spans residues 70-700; that stretch reads RFRKQRKAVV…DIFSDYANFK (631 aa). 2 Tyrosine-protein phosphatase domains span residues 135–394 and 426–689; these read FREE…LLEY and LEEE…VQDF. Residues D303, 335–341, and Q379 contribute to the substrate site; that span reads CSAGVGR. Residue C335 is the Phosphocysteine intermediate of the active site. The active-site Phosphocysteine intermediate is the C630. Y696 is subject to Phosphotyrosine.

The protein belongs to the protein-tyrosine phosphatase family. Receptor class 4 subfamily. Monomer. Isoform 2: Homodimer. Can form oligomers. Dimerization is increased by oxidative stress and decreased by EGFR. Isoform 2 interacts with GRB2. In terms of processing, a catalytically active cytoplasmic form (p65) is produced by proteolytic cleavage of either isoform 1, isoform 2 or isoform 3. Isoform 1 and isoform 2 are phosphorylated on tyrosine residues by tyrosine kinase Neu. Post-translationally, isoform 1 is glycosylated. In terms of tissue distribution, expressed in giant cell tumor (osteoclastoma rich in multinucleated osteoclastic cells).

It is found in the cell membrane. The protein localises to the cytoplasm. The catalysed reaction is O-phospho-L-tyrosyl-[protein] + H2O = L-tyrosyl-[protein] + phosphate. Its function is as follows. Isoform 1 plays a critical role in signaling transduction pathways and phosphoprotein network topology in red blood cells. May play a role in osteoclast formation and function. In terms of biological role, isoform 2 acts as a negative regulator of insulin receptor (IR) signaling in skeletal muscle. Regulates insulin-induced tyrosine phosphorylation of insulin receptor (IR) and insulin receptor substrate 1 (IRS-1), phosphorylation of protein kinase B and glycogen synthase kinase-3 and insulin induced stimulation of glucose uptake. Functionally, isoform 1 and isoform 2 act as a negative regulator of FceRI-mediated signal transduction leading to cytokine production and degranulation, most likely by acting at the level of SYK to affect downstream events such as phosphorylation of SLP76 and LAT and mobilization of Ca(2+). The sequence is that of Receptor-type tyrosine-protein phosphatase epsilon (PTPRE) from Homo sapiens (Human).